A 172-amino-acid chain; its full sequence is RNA pyrophosphohydrolase (172 aa).

Residues 6 to 149 enclose the Nudix hydrolase domain; sequence GYRLNVGIVI…KRDVYRRAMK (144 aa). Positions 38–59 match the Nudix box motif; sequence GGIDDGETPEQAMFRELYEEVG.

This sequence belongs to the Nudix hydrolase family. RppH subfamily. It depends on a divalent metal cation as a cofactor.

Its function is as follows. Accelerates the degradation of transcripts by removing pyrophosphate from the 5'-end of triphosphorylated RNA, leading to a more labile monophosphorylated state that can stimulate subsequent ribonuclease cleavage. The protein is RNA pyrophosphohydrolase of Vibrio vulnificus (strain CMCP6).